Reading from the N-terminus, the 525-residue chain is Calcium uptake protein 1 homolog, mitochondrial (525 aa).

The tract at residues 109 to 146 (ADAGQRPSSAADVNGEDKSSESESEDSEDEEAGSDLHL) is disordered. Over residues 130-141 (SESEDSEDEEAG) the composition is skewed to acidic residues. EF-hand domains are found at residues 268–303 (ISRR…VRQQ) and 459–494 (LSDH…RVQR). Ca(2+) contacts are provided by aspartate 281, asparagine 283, aspartate 285, aspartate 287, glutamate 292, aspartate 472, asparagine 474, aspartate 476, glutamine 478, and glutamate 483.

Belongs to the MICU1 family. MICU1 subfamily.

The protein resides in the mitochondrion intermembrane space. It is found in the mitochondrion inner membrane. Functionally, calcium sensor of the mitochondrial calcium uniporter (MCU) channel, which senses calcium level via its EF-hand domains. At low calcium levels, MICU1 occludes the pore of the MCU channel, preventing mitochondrial calcium uptake. At higher calcium levels, calcium-binding to MICU1 induces a conformational change that weakens MCU-MICU1 interactions and moves MICU1 away from the pore, allowing calcium permeation through the MCU channel. Also required to protect against manganese toxicity by preventing manganese uptake by MCU. During development, required in alpha/beta or gamma mushroom body neurons to support olfactory intermediate-term memory in the adult. The sequence is that of Calcium uptake protein 1 homolog, mitochondrial from Drosophila melanogaster (Fruit fly).